Reading from the N-terminus, the 363-residue chain is MSKKNNLLVAASGTGGHIFPALAVSKEVEDEWNIHWLGVRQRLDANFIPKKYNLRTLNIKTPRKNIFLFYQYIEILISTFQIIRILKEKKINLVFTTGGYISAPTIVASKLLRIPIIIHESNVIPGMVTKYFGFLCNYVLLGFKKTNSYLKNCKTIFTGTPLREQFYKFNFLPEWVPKGRGPLLIVMGGSQGAKAINQILYESLEFLIKKQFRIVHIIGESNQQPFHVKNSKNYIQKKFTNEIAALIQNCDLVISRSGAGTINELIEAEKPSILIPYPDSKNNHQEKNALILAESGGSVLINQNKISKEVFEETLERIFKIKSKKGKNHYEILDLMKKNMENNNKIKSNNEIKKFINYFLKEF.

UDP-N-acetyl-alpha-D-glucosamine is bound by residues 14–16 (TGG), Asn122, Arg163, Ser190, and Gln285.

The protein belongs to the glycosyltransferase 28 family. MurG subfamily.

It is found in the cell inner membrane. The catalysed reaction is di-trans,octa-cis-undecaprenyl diphospho-N-acetyl-alpha-D-muramoyl-L-alanyl-D-glutamyl-meso-2,6-diaminopimeloyl-D-alanyl-D-alanine + UDP-N-acetyl-alpha-D-glucosamine = di-trans,octa-cis-undecaprenyl diphospho-[N-acetyl-alpha-D-glucosaminyl-(1-&gt;4)]-N-acetyl-alpha-D-muramoyl-L-alanyl-D-glutamyl-meso-2,6-diaminopimeloyl-D-alanyl-D-alanine + UDP + H(+). It functions in the pathway cell wall biogenesis; peptidoglycan biosynthesis. Functionally, cell wall formation. Catalyzes the transfer of a GlcNAc subunit on undecaprenyl-pyrophosphoryl-MurNAc-pentapeptide (lipid intermediate I) to form undecaprenyl-pyrophosphoryl-MurNAc-(pentapeptide)GlcNAc (lipid intermediate II). This Prochlorococcus marinus (strain MIT 9312) protein is UDP-N-acetylglucosamine--N-acetylmuramyl-(pentapeptide) pyrophosphoryl-undecaprenol N-acetylglucosamine transferase.